We begin with the raw amino-acid sequence, 88 residues long: uncharacterized protein (88 aa).

The dksA C4-type zinc-finger motif lies at 39-63 (CEECGAPIPQARREAIPGVRLCIHC).

This is an uncharacterized protein from Escherichia coli (strain K12).